A 368-amino-acid polypeptide reads, in one-letter code: Polymerase delta-interacting protein 2 (368 aa).

A mitochondrion-targeting transit peptide spans 1-21; the sequence is MAGCVARRALAVGSRWWSRSL. Residues 235-360 enclose the ApaG domain; that stretch reads RETTENIRVT…FSLESNKDEK (126 aa). T292 carries the phosphothreonine modification.

Interacts with PCNA and POLD2. Interacts with SSBP1. Interacts with PRIMPOL; leading to enhance DNA polymerase activity of PRIMPOL. Interacts with POLH. Interacts with POLD1; leading to stimulate DNA polymerase activity of POLD1.

It localises to the mitochondrion matrix. It is found in the nucleus. Its function is as follows. Involved in DNA damage tolerance by regulating translesion synthesis (TLS) of templates carrying DNA damage lesions such as 8oxoG and abasic sites. May act by stimulating activity of DNA polymerases involved in TLS, such as PRIMPOL and polymerase delta (POLD1). The polypeptide is Polymerase delta-interacting protein 2 (Mus musculus (Mouse)).